The sequence spans 414 residues: 3-oxo-isoapionate-4-phosphate transcarboxylase/hydrolase (414 aa).

3 residues coordinate Mg(2+): lysine 180, aspartate 182, and glutamate 183. Position 180 is an N6-carboxylysine (lysine 180).

This sequence belongs to the RuBisCO large chain family. Mg(2+) is required as a cofactor.

The enzyme catalyses 3-oxoisoapionate 4-phosphate + H2O = (2R)-3-phosphoglycerate + glycolate + H(+). The protein operates within carbohydrate metabolism. In terms of biological role, involved in catabolism of D-apiose. Catalyzes the conversion of 3-oxo-isoapionate 4-phosphate to 3-phosphoglycerate and glycolate. In Xanthobacter autotrophicus (strain ATCC BAA-1158 / Py2), this protein is 3-oxo-isoapionate-4-phosphate transcarboxylase/hydrolase.